Consider the following 417-residue polypeptide: NADH-quinone oxidoreductase subunit D (417 aa).

This sequence belongs to the complex I 49 kDa subunit family. NDH-1 is composed of 14 different subunits. Subunits NuoB, C, D, E, F, and G constitute the peripheral sector of the complex.

Its subcellular location is the cell inner membrane. It catalyses the reaction a quinone + NADH + 5 H(+)(in) = a quinol + NAD(+) + 4 H(+)(out). Functionally, NDH-1 shuttles electrons from NADH, via FMN and iron-sulfur (Fe-S) centers, to quinones in the respiratory chain. The immediate electron acceptor for the enzyme in this species is believed to be ubiquinone. Couples the redox reaction to proton translocation (for every two electrons transferred, four hydrogen ions are translocated across the cytoplasmic membrane), and thus conserves the redox energy in a proton gradient. In Burkholderia ambifaria (strain MC40-6), this protein is NADH-quinone oxidoreductase subunit D.